The primary structure comprises 310 residues: ADP-L-glycero-D-manno-heptose-6-epimerase (310 aa).

NADP(+)-binding positions include 10–11 (FI), 31–32 (DN), K38, K53, 75–79 (EGACS), and N92. Y140 functions as the Proton acceptor in the catalytic mechanism. K144 contacts NADP(+). N169 is a binding site for substrate. Residues V170 and K178 each coordinate NADP(+). K178 acts as the Proton acceptor in catalysis. Substrate contacts are provided by residues S180, H187, 201 to 204 (FEGS), R209, and Y272.

This sequence belongs to the NAD(P)-dependent epimerase/dehydratase family. HldD subfamily. Homopentamer. NADP(+) serves as cofactor.

It catalyses the reaction ADP-D-glycero-beta-D-manno-heptose = ADP-L-glycero-beta-D-manno-heptose. It functions in the pathway nucleotide-sugar biosynthesis; ADP-L-glycero-beta-D-manno-heptose biosynthesis; ADP-L-glycero-beta-D-manno-heptose from D-glycero-beta-D-manno-heptose 7-phosphate: step 4/4. Catalyzes the interconversion between ADP-D-glycero-beta-D-manno-heptose and ADP-L-glycero-beta-D-manno-heptose via an epimerization at carbon 6 of the heptose. The polypeptide is ADP-L-glycero-D-manno-heptose-6-epimerase (Salmonella arizonae (strain ATCC BAA-731 / CDC346-86 / RSK2980)).